Here is a 92-residue protein sequence, read N- to C-terminus: YcgL domain-containing protein Shewana3_2381 (92 aa).

Positions 1 to 85 (MLCAVYKSSR…PQVNLLAEHR (85 aa)) constitute a YcgL domain.

This chain is YcgL domain-containing protein Shewana3_2381, found in Shewanella sp. (strain ANA-3).